A 178-amino-acid polypeptide reads, in one-letter code: Cytochrome b6-f complex iron-sulfur subunit (178 aa).

Residues 20 to 42 (LLTFGTATGVALGALYPVANFFM) traverse the membrane as a helical segment. Residues 71 to 161 (NHPAGDRSLV…IDIDDDNVLV (91 aa)) enclose the Rieske domain. Cys107, His109, Cys125, and His128 together coordinate [2Fe-2S] cluster. The cysteines at positions 112 and 127 are disulfide-linked.

It belongs to the Rieske iron-sulfur protein family. The 4 large subunits of the cytochrome b6-f complex are cytochrome b6, subunit IV (17 kDa polypeptide, PetD), cytochrome f and the Rieske protein, while the 4 small subunits are PetG, PetL, PetM and PetN. The complex functions as a dimer. The cofactor is [2Fe-2S] cluster.

The protein localises to the cellular thylakoid membrane. The enzyme catalyses 2 oxidized [plastocyanin] + a plastoquinol + 2 H(+)(in) = 2 reduced [plastocyanin] + a plastoquinone + 4 H(+)(out). In terms of biological role, component of the cytochrome b6-f complex, which mediates electron transfer between photosystem II (PSII) and photosystem I (PSI), cyclic electron flow around PSI, and state transitions. The protein is Cytochrome b6-f complex iron-sulfur subunit of Prochlorococcus marinus (strain SARG / CCMP1375 / SS120).